The primary structure comprises 131 residues: uncharacterized protein (131 aa).

The segment covering 31–40 (AAATSRAAPL) has biased composition (low complexity). The interval 31–131 (AAATSRAAPL…EAKTEQTKTP (101 aa)) is disordered.

This is an uncharacterized protein from Homo sapiens (Human).